A 362-amino-acid polypeptide reads, in one-letter code: 3-isopropylmalate dehydrogenase (362 aa).

75–88 (GPKWANLPPTEQPE) lines the NAD(+) pocket. Substrate contacts are provided by arginine 96, arginine 106, arginine 135, and aspartate 224. Mg(2+) contacts are provided by aspartate 224, aspartate 248, and aspartate 252. Position 282 to 294 (282 to 294 (GSAPDIAGLGVAN)) interacts with NAD(+).

This sequence belongs to the isocitrate and isopropylmalate dehydrogenases family. LeuB type 1 subfamily. In terms of assembly, homodimer. Mg(2+) serves as cofactor. It depends on Mn(2+) as a cofactor.

It localises to the cytoplasm. It catalyses the reaction (2R,3S)-3-isopropylmalate + NAD(+) = 4-methyl-2-oxopentanoate + CO2 + NADH. It functions in the pathway amino-acid biosynthesis; L-leucine biosynthesis; L-leucine from 3-methyl-2-oxobutanoate: step 3/4. Catalyzes the oxidation of 3-carboxy-2-hydroxy-4-methylpentanoate (3-isopropylmalate) to 3-carboxy-4-methyl-2-oxopentanoate. The product decarboxylates to 4-methyl-2 oxopentanoate. This is 3-isopropylmalate dehydrogenase from Colwellia psychrerythraea (strain 34H / ATCC BAA-681) (Vibrio psychroerythus).